A 215-amino-acid chain; its full sequence is Orotate phosphoribosyltransferase (215 aa).

Lysine 25 is a 5-phospho-alpha-D-ribose 1-diphosphate binding site. 33–34 is a binding site for orotate; sequence FF. Residues 71–72, arginine 98, lysine 99, lysine 102, histidine 104, and 124–132 contribute to the 5-phospho-alpha-D-ribose 1-diphosphate site; these read YK and DDVITAGTA. Orotate is bound by residues threonine 128 and arginine 156.

It belongs to the purine/pyrimidine phosphoribosyltransferase family. PyrE subfamily. In terms of assembly, homodimer.

It catalyses the reaction orotidine 5'-phosphate + diphosphate = orotate + 5-phospho-alpha-D-ribose 1-diphosphate. It functions in the pathway pyrimidine metabolism; UMP biosynthesis via de novo pathway; UMP from orotate: step 1/2. Catalyzes the transfer of a ribosyl phosphate group from 5-phosphoribose 1-diphosphate to orotate, leading to the formation of orotidine monophosphate (OMP). The chain is Orotate phosphoribosyltransferase (ura5) from Schizosaccharomyces pombe (strain 972 / ATCC 24843) (Fission yeast).